The chain runs to 479 residues: Membrane-bound lytic murein transglycosylase F (479 aa).

Residues 1 to 15 (MKRLLLVLCYITLLA) form the signal peptide. Residues 16–258 (GCQKVVVEQE…HLNEKYFAHV (243 aa)) are non-LT domain. The segment at 260-479 (RFDYVDTRAF…QTDAIQPQQP (220 aa)) is LT domain. The active site involves Glu-303. The interval 457 to 479 (LQTAEAKETEEKPQTDAIQPQQP) is disordered. The span at 461–470 (EAKETEEKPQ) shows a compositional bias: basic and acidic residues.

The protein in the N-terminal section; belongs to the bacterial solute-binding protein 3 family. It in the C-terminal section; belongs to the transglycosylase Slt family.

Its subcellular location is the cell outer membrane. The catalysed reaction is Exolytic cleavage of the (1-&gt;4)-beta-glycosidic linkage between N-acetylmuramic acid (MurNAc) and N-acetylglucosamine (GlcNAc) residues in peptidoglycan, from either the reducing or the non-reducing ends of the peptidoglycan chains, with concomitant formation of a 1,6-anhydrobond in the MurNAc residue.. Its function is as follows. Murein-degrading enzyme that degrades murein glycan strands and insoluble, high-molecular weight murein sacculi, with the concomitant formation of a 1,6-anhydromuramoyl product. Lytic transglycosylases (LTs) play an integral role in the metabolism of the peptidoglycan (PG) sacculus. Their lytic action creates space within the PG sacculus to allow for its expansion as well as for the insertion of various structures such as secretion systems and flagella. In Shewanella pealeana (strain ATCC 700345 / ANG-SQ1), this protein is Membrane-bound lytic murein transglycosylase F.